Reading from the N-terminus, the 449-residue chain is Probable ubiquitin carboxyl-terminal hydrolase 8 (449 aa).

A UBP-type zinc finger spans residues 6 to 113 (EGCQHLKLKP…FKIKNIKAWQ (108 aa)). 12 residues coordinate Zn(2+): cysteine 8, histidine 10, cysteine 38, cysteine 41, cysteine 51, cysteine 54, cysteine 59, histidine 64, histidine 68, histidine 74, cysteine 87, and cysteine 90. Residues 145–435 (RGIQNLGATC…QAYLLFYHER (291 aa)) form the USP domain. The Nucleophile role is filled by cysteine 154. Histidine 178, cysteine 183, cysteine 188, cysteine 191, histidine 246, cysteine 257, cysteine 259, histidine 262, cysteine 275, cysteine 278, cysteine 317, and cysteine 320 together coordinate Zn(2+). The Proton acceptor role is filled by histidine 395.

It belongs to the peptidase C19 family. UBP8 subfamily. In terms of assembly, component of the 1.8 MDa SAGA (Spt-Ada-Gcn5 acetyltransferase) complex, which is composed of 19 subunits tra1, spt7, taf5, ngg1/ada3, sgf73, spt20, spt8, taf12, taf6, hfi1/ada1, ubp8, gcn5, ada2, spt3, sgf29, taf10, taf9, sgf11 and sus1. The SAGA complex is composed of 4 modules, namely the HAT (histone acetyltransferase) module (gcn5, ada2, ngg1/ada3 and sgf29), the DUB (deubiquitinating) module (ubp8, sgf11, sgf73 and sus1), the core or TAF (TBP-associated factor) module (taf5, taf6, taf9, taf10 and taf12), and the Tra1 or SPT (Suppressor of Ty) module (tra1, hfi1/ada1, spt3, spt7, spt8 and spt20). The Tra1/SPT module binds activators, the core module recruits TBP (TATA-binding protein), the HAT module contains the histone H3 acetyltransferase gcn5, and the DUB module comprises the histone H2B deubiquitinase ubp8.

It localises to the nucleus. The protein localises to the nucleoplasm. The catalysed reaction is Thiol-dependent hydrolysis of ester, thioester, amide, peptide and isopeptide bonds formed by the C-terminal Gly of ubiquitin (a 76-residue protein attached to proteins as an intracellular targeting signal).. Functionally, histone deubiquitinating enzyme component of the transcription coactivator SAGA complex. SAGA acts as a general cofactor required for essentially all RNA polymerase II transcription. At the promoters, SAGA is required for transcription pre-initiation complex (PIC) recruitment. It influences RNA polymerase II transcriptional activity through different activities such as TBP interaction (via core/TAF module) and promoter selectivity, interaction with transcription activators (via Tra1/SPT module), and chromatin modification through histone acetylation (via HAT module) and deubiquitination (via DUB module). SAGA preferentially acetylates histones H3 (to form H3K9ac, H3K14ac, H3K18ac and H3K23ac) and H2B and deubiquitinates histone H2B. SAGA interacts with DNA via upstream activating sequences (UASs). Within the DUB module, the correctly positioned zinc finger domains of sgf11 and sgf73 are both required to fully activate the ubiquitin hydrolase ubp8. The DUB module is also linked to the splicing efficiency of many transcripts. The chain is Probable ubiquitin carboxyl-terminal hydrolase 8 (ubp8) from Schizosaccharomyces pombe (strain 972 / ATCC 24843) (Fission yeast).